The primary structure comprises 57 residues: Bowman-Birk type proteinase inhibitor B4 (57 aa).

Cystine bridges form between C6–C55, C12–C17, C26–C33, and C30–C47.

This sequence belongs to the Bowman-Birk serine protease inhibitor family. As to expression, expressed in bulb (at protein level).

Functionally, serine protease inhibitor. Inhibits trypsin (Ki = 110 nM) and very weakly inhibits chymotrypsin (Ki =1200 nM). Does not inhibit bacterial subtilisin. In Hyacinthus orientalis (Common hyacinth), this protein is Bowman-Birk type proteinase inhibitor B4.